Here is a 120-residue protein sequence, read N- to C-terminus: Small ribosomal subunit protein bS6 (120 aa).

The span at 97–112 (SNEPSPILKNQSTENT) shows a compositional bias: polar residues. Residues 97 to 120 (SNEPSPILKNQSTENTPVIDVTAN) are disordered.

It belongs to the bacterial ribosomal protein bS6 family.

Functionally, binds together with bS18 to 16S ribosomal RNA. The sequence is that of Small ribosomal subunit protein bS6 from Rickettsia bellii (strain OSU 85-389).